The primary structure comprises 234 residues: Demethylmenaquinone methyltransferase (234 aa).

Residues Thr-58, Asp-79, and 106–107 (NA) contribute to the S-adenosyl-L-methionine site.

The protein belongs to the class I-like SAM-binding methyltransferase superfamily. MenG/UbiE family.

The catalysed reaction is a 2-demethylmenaquinol + S-adenosyl-L-methionine = a menaquinol + S-adenosyl-L-homocysteine + H(+). It functions in the pathway quinol/quinone metabolism; menaquinone biosynthesis; menaquinol from 1,4-dihydroxy-2-naphthoate: step 2/2. Functionally, methyltransferase required for the conversion of demethylmenaquinol (DMKH2) to menaquinol (MKH2). The sequence is that of Demethylmenaquinone methyltransferase from Geobacillus kaustophilus (strain HTA426).